The primary structure comprises 84 residues: Putative membrane protein insertion efficiency factor (84 aa).

Residues 63–84 (LGGSGYDPPPPPKTPRKWKCEE) form a disordered region.

The protein belongs to the UPF0161 family.

It localises to the cell inner membrane. In terms of biological role, could be involved in insertion of integral membrane proteins into the membrane. The sequence is that of Putative membrane protein insertion efficiency factor from Caulobacter sp. (strain K31).